The following is a 368-amino-acid chain: Glucose 1-dehydrogenase 2 (368 aa).

Residue Cys-41 coordinates Zn(2+). Thr-43 contributes to the substrate binding site. Zn(2+)-binding residues include His-68 and Glu-69. Residue Asn-91 coordinates substrate. The Zn(2+) site is built by Cys-95, Cys-98, Cys-101, Cys-109, and Gln-152. Substrate contacts are provided by Gln-152 and Asp-156. Residues 213–215 (NRR), 279–281 (FGF), 307–309 (LDN), and Lys-356 contribute to the NADP(+) site. Asn-309 is a binding site for substrate.

This sequence belongs to the zinc-containing alcohol dehydrogenase family. Glucose 1-dehydrogenase subfamily. The cofactor is Zn(2+).

The enzyme catalyses D-glucose + NAD(+) = D-glucono-1,5-lactone + NADH + H(+). It carries out the reaction D-glucose + NADP(+) = D-glucono-1,5-lactone + NADPH + H(+). Functionally, catalyzes the NAD(P)(+)-dependent oxidation of D-glucose to D-gluconate via gluconolactone. Can utilize both NAD(+) and NADP(+) as electron acceptor. Is involved in the degradation of glucose through a non-phosphorylative variant of the Entner-Doudoroff pathway. The protein is Glucose 1-dehydrogenase 2 of Saccharolobus solfataricus (strain ATCC 35092 / DSM 1617 / JCM 11322 / P2) (Sulfolobus solfataricus).